We begin with the raw amino-acid sequence, 142 residues long: Small ribosomal subunit protein uS12 (142 aa).

Belongs to the universal ribosomal protein uS12 family. In terms of assembly, part of the 30S ribosomal subunit.

Its function is as follows. With S4 and S5 plays an important role in translational accuracy. Located at the interface of the 30S and 50S subunits. This is Small ribosomal subunit protein uS12 from Methanoculleus marisnigri (strain ATCC 35101 / DSM 1498 / JR1).